Consider the following 481-residue polypeptide: Rho GTPase-activating protein 15 (481 aa).

Residues Ser-51, Ser-111, Ser-204, Ser-207, and Ser-249 each carry the phosphoserine modification. A PH domain is found at 87-197 (MVEKEGYLQK…WFQAIKNAID (111 aa)). One can recognise a Rho-GAP domain in the interval 287-476 (SHLHTVCERE…FMLTEYDKIF (190 aa)).

Its subcellular location is the cytoplasm. The protein localises to the membrane. Functionally, GTPase activator for the Rho-type GTPases by converting them to an inactive GDP-bound state. Has activity toward RAC1. Overexpression results in an increase in actin stress fibers and cell contraction. In Mus musculus (Mouse), this protein is Rho GTPase-activating protein 15 (Arhgap15).